Here is a 95-residue protein sequence, read N- to C-terminus: Aspartyl/glutamyl-tRNA(Asn/Gln) amidotransferase subunit C (95 aa).

This sequence belongs to the GatC family. In terms of assembly, heterotrimer of A, B and C subunits.

It catalyses the reaction L-glutamyl-tRNA(Gln) + L-glutamine + ATP + H2O = L-glutaminyl-tRNA(Gln) + L-glutamate + ADP + phosphate + H(+). The catalysed reaction is L-aspartyl-tRNA(Asn) + L-glutamine + ATP + H2O = L-asparaginyl-tRNA(Asn) + L-glutamate + ADP + phosphate + 2 H(+). Allows the formation of correctly charged Asn-tRNA(Asn) or Gln-tRNA(Gln) through the transamidation of misacylated Asp-tRNA(Asn) or Glu-tRNA(Gln) in organisms which lack either or both of asparaginyl-tRNA or glutaminyl-tRNA synthetases. The reaction takes place in the presence of glutamine and ATP through an activated phospho-Asp-tRNA(Asn) or phospho-Glu-tRNA(Gln). This is Aspartyl/glutamyl-tRNA(Asn/Gln) amidotransferase subunit C from Syntrophus aciditrophicus (strain SB).